The sequence spans 77 residues: Conotoxin Cl6.15 (77 aa).

The N-terminal stretch at 1 to 19 (MKLSVKFLLFLMILPLIAG) is a signal peptide. The propeptide occupies 20 to 37 (EDMSDNDAPKSVDVQRNV). Disulfide bonds link cysteine 49-cysteine 61, cysteine 55-cysteine 66, and cysteine 60-cysteine 75.

It belongs to the conotoxin I1 superfamily. Expressed by the venom duct.

The protein resides in the secreted. In Californiconus californicus (California cone), this protein is Conotoxin Cl6.15.